The primary structure comprises 494 residues: Nuclear distribution protein PAC1 (494 aa).

The LisH domain occupies 14-46; sequence QKNELDKSVLRYLNWNYKQTVRHEHAQDYESVR. Residues 90–123 are a coiled coil; the sequence is NSIVRLQKKIIELEQNTETLVSQIKDLNTQVSEL. 7 WD repeats span residues 153–192, 196–244, 251–292, 295–334, 347–395, 415–454, and 457–492; these read NVES…IPLA, SHTK…CKFQ, GHEH…SLKT, PHSQ…SVGT, HFIE…LMAH, GHLS…HVWE, and HTGF…SNVF.

This sequence belongs to the WD repeat LIS1/nudF family. Self-associates. Interacts with NDL1 and dynein.

Its subcellular location is the cytoplasm. It localises to the cytoskeleton. The protein resides in the spindle pole. In terms of biological role, positively regulates the activity of the minus-end directed microtubule motor protein dynein. Plays a central role in positioning the mitotic spindle at the bud neck during cell division. Targets cytoplasmic dynein to microtubule plus ends, thereby promoting dynein-mediated microtubule sliding along the bud cortex and consequently the movement of the mitotic spindle to the bud neck. The chain is Nuclear distribution protein PAC1 from Saccharomyces cerevisiae (strain JAY291) (Baker's yeast).